The chain runs to 432 residues: MKKAMIYGLGISGTGAKELLEKEGYKIIVVDDKKAMTSEEALNHLEGLEFFIKSPGIPYNDFVKEVQKRGIKILDEIEIAYNYMIEKGLKTKIIAITGTNGKSTTTAKISDMLNHAGYKATYAGNIGRSLSEVLLKEKDLDFISLELSSFQLENIENFKPCISMIINIGPDHIERYKSFDEYYNTKFNITKNQTEDLYFIENIDDEEIEKRAKQIKAKRISVSKFKKADIFVENDKIYHDKDDIIDVDKLSLKGIHNLENTLFMVATAEILKLDREKLKEFLMIATPLEHRTELFFNYGKLKFINDSKATNVDSTKFAIQANKNSILICGGYDKGVDLAPLAEMIKENIKEVYLIGVIADKIENELKKVGYEDNKIHKLVNIENSLQDMRKRFTKDSDEVILLSPATSSYDQFNSFEHRGKVFKELVLKIFG.

Residue 98 to 104 (GTNGKST) coordinates ATP.

The protein belongs to the MurCDEF family.

The protein resides in the cytoplasm. It carries out the reaction UDP-N-acetyl-alpha-D-muramoyl-L-alanine + D-glutamate + ATP = UDP-N-acetyl-alpha-D-muramoyl-L-alanyl-D-glutamate + ADP + phosphate + H(+). It functions in the pathway cell wall biogenesis; peptidoglycan biosynthesis. Functionally, cell wall formation. Catalyzes the addition of glutamate to the nucleotide precursor UDP-N-acetylmuramoyl-L-alanine (UMA). The polypeptide is UDP-N-acetylmuramoylalanine--D-glutamate ligase (Fusobacterium nucleatum subsp. nucleatum (strain ATCC 25586 / DSM 15643 / BCRC 10681 / CIP 101130 / JCM 8532 / KCTC 2640 / LMG 13131 / VPI 4355)).